A 303-amino-acid chain; its full sequence is MTWPDRDTSAFPSALPGAFDASSAMSRGVVNLSSFSDFLRTQAPHLLPVSGSPGVTPSDAVPHGTTIVALKFPGGVVMAGDRRATQGHMIASRDVQKVYITDDYTVTGIAGTAAIAVEFARLYAVELEHYEKLEGVALTFPGKVNRLATMVRGNLGAALQGFVALPLLAGYDLDDPNPEGAGRIVSFDAAGGHNLEEEGYQSVGSGSIFAKSSMKKLYSQVTDADSALRVAIEALYDAADDDSATGGPDLVRGIFPTAVVITADGAVEIAEQQIADMCREIIQNRSRADTFGPDHAPVRGDEL.

The propeptide at 1–64 (MTWPDRDTSA…VTPSDAVPHG (64 aa)) is removed in mature form; by autocatalysis. The Nucleophile role is filled by Thr-65.

This sequence belongs to the peptidase T1B family. In terms of assembly, the 20S proteasome core is composed of 14 alpha and 14 beta subunits that assemble into four stacked heptameric rings, resulting in a barrel-shaped structure. The two inner rings, each composed of seven catalytic beta subunits, are sandwiched by two outer rings, each composed of seven alpha subunits. The catalytic chamber with the active sites is on the inside of the barrel. Has a gated structure, the ends of the cylinder being occluded by the N-termini of the alpha-subunits. Is capped by the proteasome-associated ATPase, ARC.

The protein resides in the cytoplasm. It catalyses the reaction Cleavage of peptide bonds with very broad specificity.. Its pathway is protein degradation; proteasomal Pup-dependent pathway. Its activity is regulated as follows. The formation of the proteasomal ATPase ARC-20S proteasome complex, likely via the docking of the C-termini of ARC into the intersubunit pockets in the alpha-rings, may trigger opening of the gate for substrate entry. Interconversion between the open-gate and close-gate conformations leads to a dynamic regulation of the 20S proteasome proteolysis activity. Functionally, component of the proteasome core, a large protease complex with broad specificity involved in protein degradation. This is Proteasome subunit beta from Mycolicibacterium gilvum (strain PYR-GCK) (Mycobacterium gilvum (strain PYR-GCK)).